The sequence spans 295 residues: Zinc finger CCCH domain-containing protein 44 (295 aa).

The disordered stretch occupies residues 1–31 (MEAGGGKRAAPEGTNGAAKRARASESSQVGV). 2 C3H1-type zinc fingers span residues 32–60 (GSKL…HNFP) and 98–126 (SVKT…HGER). The KH domain occupies 166–230 (SATAKISVDA…DQIKHASAMV (65 aa)). The C3H1-type 3 zinc-finger motif lies at 259 to 286 (NFKTKLCENFNKGSCTFGDRCHFAHGES).

This is Zinc finger CCCH domain-containing protein 44 from Oryza sativa subsp. japonica (Rice).